The following is a 545-amino-acid chain: E3 ubiquitin-protein ligase ipaH9.8 (545 aa).

The interval 1-242 is interaction with target proteins; sequence MLPINNNFSL…YHGPRIYFSM (242 aa). LRR repeat units follow at residues 57 to 77, 78 to 99, 100 to 117, 118 to 139, 140 to 157, 158 to 179, 182 to 203, and 205 to 228; these read NSDE…NLPA, QITL…PVTL, KKLY…VLPP, ALES…PDSL, LTMN…SLPQ, ALKN…SEGN, VVRE…ILNL, and NECS…QRLT. Residues 243–250 form a linker region; that stretch reads SDGQQNTL. The segment at 251 to 545 is E3 ubiquitin-protein ligase catalytic domain; it reads HRPLADAVTA…PENGSQLHHS (295 aa). One can recognise an NEL domain in the interval 253-545; sequence PLADAVTAWF…PENGSQLHHS (293 aa). Cysteine 337 serves as the catalytic Glycyl thioester intermediate.

Belongs to the LRR-containing bacterial E3 ligase family. In terms of assembly, also interacts with human and mouse U2AF1 (U2AF35). In terms of processing, autoubiquitinated (in vitro). Ubiquitinated in the presence of host E1 ubiquitin-activating enzyme, E2 ubiquitin-conjugating enzyme and ubiquitin.

It is found in the secreted. The protein resides in the host cytoplasm. Its subcellular location is the host nucleus. It catalyses the reaction S-ubiquitinyl-[E2 ubiquitin-conjugating enzyme]-L-cysteine + [acceptor protein]-L-lysine = [E2 ubiquitin-conjugating enzyme]-L-cysteine + N(6)-ubiquitinyl-[acceptor protein]-L-lysine.. Its pathway is protein modification; protein ubiquitination. Exists in an autoinhibited state in the absence of substrate protein, due to interactions of the leucine-rich repeats with NEL domain. Is activated upon binding to a substrate protein. Functionally, effector E3 ubiquitin ligase that interferes with host's ubiquitination pathway and modulates the acute inflammatory responses, thus facilitating bacterial colonization within the host cell. Interacts with IKBKG (NEMO) and TNIP1 (ABIN-1), a ubiquitin-binding adapter protein, which results in TNIP1-dependent 'Lys-27'-linked polyubiquitination of IKBKG. Consequently, polyubiquitinated IKBKG undergoes proteasome-dependent degradation, which perturbs NF-kappa-B activation during bacterial infection. Mediates polyubiquitination of host U2AF1, leading to its proteasomal degradation. Catalyzes 'Lys-48'-linked polyubiquitination and subsequent degradation of a subset of host guanylate-binding proteins (GBP1, GBP2, GBP4 and GBP6), thereby suppressing host cell defense. In contrast, host GBP3 and GBP7 are not ubiquitinated by IpaH9.8. Uses UBE2D2 (UBCH5B) as an E2 ubiquitin-conjugating enzyme. The sequence is that of E3 ubiquitin-protein ligase ipaH9.8 from Shigella flexneri.